Reading from the N-terminus, the 235-residue chain is 2-C-methyl-D-erythritol 4-phosphate cytidylyltransferase (235 aa).

Belongs to the IspD/TarI cytidylyltransferase family. IspD subfamily.

It carries out the reaction 2-C-methyl-D-erythritol 4-phosphate + CTP + H(+) = 4-CDP-2-C-methyl-D-erythritol + diphosphate. Its pathway is isoprenoid biosynthesis; isopentenyl diphosphate biosynthesis via DXP pathway; isopentenyl diphosphate from 1-deoxy-D-xylulose 5-phosphate: step 2/6. Functionally, catalyzes the formation of 4-diphosphocytidyl-2-C-methyl-D-erythritol from CTP and 2-C-methyl-D-erythritol 4-phosphate (MEP). In Pseudomonas putida (strain W619), this protein is 2-C-methyl-D-erythritol 4-phosphate cytidylyltransferase.